We begin with the raw amino-acid sequence, 215 residues long: Pyrophosphatase PpaX (215 aa).

Residue D9 is the Nucleophile of the active site.

The protein belongs to the HAD-like hydrolase superfamily. PpaX family. Mg(2+) is required as a cofactor.

The enzyme catalyses diphosphate + H2O = 2 phosphate + H(+). In terms of biological role, hydrolyzes pyrophosphate formed during P-Ser-HPr dephosphorylation by HPrK/P. Might play a role in controlling the intracellular pyrophosphate pool. The sequence is that of Pyrophosphatase PpaX from Anoxybacillus flavithermus (strain DSM 21510 / WK1).